Here is a 921-residue protein sequence, read N- to C-terminus: Guanylate kinase-associated protein mars (921 aa).

Serine 49 is subject to Phosphoserine. Residue threonine 51 is modified to Phosphothreonine. Phosphoserine is present on residues serine 76 and serine 170. Residue tyrosine 172 is modified to Phosphotyrosine. 2 disordered regions span residues 179–208 (GKGK…TVAA) and 273–325 (RPTP…PLGN). Low complexity-rich tracts occupy residues 193–208 (KPTS…TVAA) and 273–285 (RPTP…AKTP). Serine 444 carries the phosphoserine modification. A disordered region spans residues 500 to 531 (QTTVKEDTGDSTLVPEGTKTPPRRESNGMPNY). Threonine 519 bears the Phosphothreonine mark. A Phosphoserine modification is found at serine 554. Disordered regions lie at residues 641–660 (AGAT…SKPV) and 743–763 (TKVE…RHSS). Phosphoserine occurs at positions 785 and 792. Disordered regions lie at residues 809–833 (QNAA…TKRQ) and 861–921 (ETVG…SEFM). Position 826 is a phosphothreonine (threonine 826). Over residues 878-907 (EASTESGSLEQNPGRDSNQENEATPRTYTL) the composition is skewed to polar residues.

It belongs to the SAPAP family. Expressed in the central nervous system and at different stages of gametogenesis. In embryos, it is expressed in central nervous system and brain. In testis, it is strongly expressed in pre-meiotic germ cells, but is not found in somatic or post-meiotic cells.

Its subcellular location is the cell membrane. The protein resides in the nucleus. It localises to the nucleoplasm. The protein localises to the cytoplasm. It is found in the cytoskeleton. Its subcellular location is the spindle. Its function is as follows. Cell cycle regulator. The protein is Guanylate kinase-associated protein mars (mars) of Drosophila melanogaster (Fruit fly).